Consider the following 423-residue polypeptide: Methanol:N,N-dimethyl-4-nitrosoaniline oxidoreductase (423 aa).

The protein belongs to the iron-containing alcohol dehydrogenase family. As to quaternary structure, homodecamer. It depends on Mg(2+) as a cofactor. Requires Zn(2+) as cofactor. NADPH is required as a cofactor.

The catalysed reaction is methanol + A = formaldehyde + AH2. Catalyzes the oxidation of methanol to yield formaldehyde. While the in vivo electron acceptor is not known, N,N-dimethyl-4-nitrosoaniline (NDMA) can serve this function in vitro and is reduced to 4-(hydroxylamino)-N,N-dimethylaniline. This is Methanol:N,N-dimethyl-4-nitrosoaniline oxidoreductase (thcE) from Rhodococcus erythropolis (Arthrobacter picolinophilus).